The chain runs to 854 residues: Gamma-secretase-activating protein (854 aa).

It belongs to the GSAP family. In terms of assembly, interacts with APP; specifically interacts with the CTF-alpha product of APP. Interacts with the gamma-secretase complex. In terms of processing, the protein is first synthesized as a holoprotein form of 98 kDa and rapidly processed into the gamma-secretase-activating protein 16 kDa C-terminal form, which constitutes the predominant form. Widely expressed.

The protein localises to the golgi apparatus. It localises to the trans-Golgi network. Regulator of gamma-secretase activity, which specifically activates the production of amyloid-beta protein (amyloid-beta protein 40 and amyloid-beta protein 42), without affecting the cleavage of other gamma-secretase targets such has Notch. The gamma-secretase complex is an endoprotease complex that catalyzes the intramembrane cleavage of integral membrane proteins such as Notch receptors and APP (amyloid-beta precursor protein). Specifically promotes the gamma-cleavage of APP CTF-alpha (also named APP-CTF) by the gamma-secretase complex to generate amyloid-beta, while it reduces the epsilon-cleavage of APP CTF-alpha, leading to a low production of AICD. This chain is Gamma-secretase-activating protein (GSAP), found in Homo sapiens (Human).